The chain runs to 150 residues: MQVLTKRYPKNCLLTVMDRYSAVVRNMEQVVMIPSLLRDVQLSGPGGSVQDGAPDLYTYFTMLKSICVEVDHGLLPREEWQAKVAGNETSEAENDAAETEEAEEDRISEELDLEAQFHLHFCSLHHILTHLTRKAQEVTRKYQEMTGQVL.

The segment at 83–104 (KVAGNETSEAENDAAETEEAEE) is disordered. Ser-90 is modified (phosphoserine). The span at 90 to 104 (SEAENDAAETEEAEE) shows a compositional bias: acidic residues.

The protein belongs to the SPOT14 family. In terms of assembly, homodimer. Heterodimer with MID1IP1. Interacts with THRB and PLAGL1. In terms of tissue distribution, mainly expressed in tissues that synthesize triglycerides.

It localises to the nucleus. The protein localises to the cytoplasm. Plays a role in the regulation of lipogenesis, especially in lactating mammary gland. Important for the biosynthesis of triglycerides with medium-length fatty acid chains. May modulate lipogenesis by interacting with MID1IP1 and preventing its interaction with ACACA. May function as transcriptional coactivator. May modulate the transcription factor activity of THRB. In Mus musculus (Mouse), this protein is Thyroid hormone-inducible hepatic protein (Thrsp).